Consider the following 47-residue polypeptide: Protein PsbN (47 aa).

Residues 9 to 31 (YSLLIAMVTITFGLTGYGLYTAF) traverse the membrane as a helical segment.

Belongs to the PsbN family.

The protein localises to the cellular thylakoid membrane. Its function is as follows. May play a role in photosystem I and II biogenesis. This Prochlorococcus marinus (strain MIT 9303) protein is Protein PsbN.